The primary structure comprises 330 residues: ADP-L-glycero-D-manno-heptose-6-epimerase (330 aa).

NADP(+) is bound by residues 11–12 (FI), 32–33 (DD), glutamine 39, glutamine 54, 75–79 (QGACA), and asparagine 92. The active-site Proton acceptor is the tyrosine 139. Lysine 143 is an NADP(+) binding site. Asparagine 168 provides a ligand contact to substrate. The NADP(+) site is built by valine 169 and lysine 177. Lysine 177 functions as the Proton acceptor in the catalytic mechanism. Residues arginine 179, histidine 186, 200 to 203 (FGEH), arginine 213, and tyrosine 292 each bind substrate.

It belongs to the NAD(P)-dependent epimerase/dehydratase family. HldD subfamily. Homopentamer. NADP(+) serves as cofactor.

The enzyme catalyses ADP-D-glycero-beta-D-manno-heptose = ADP-L-glycero-beta-D-manno-heptose. It functions in the pathway nucleotide-sugar biosynthesis; ADP-L-glycero-beta-D-manno-heptose biosynthesis; ADP-L-glycero-beta-D-manno-heptose from D-glycero-beta-D-manno-heptose 7-phosphate: step 4/4. In terms of biological role, catalyzes the interconversion between ADP-D-glycero-beta-D-manno-heptose and ADP-L-glycero-beta-D-manno-heptose via an epimerization at carbon 6 of the heptose. The sequence is that of ADP-L-glycero-D-manno-heptose-6-epimerase from Pseudomonas paraeruginosa (strain DSM 24068 / PA7) (Pseudomonas aeruginosa (strain PA7)).